A 323-amino-acid polypeptide reads, in one-letter code: Thymidine kinase (323 aa).

11 to 18 (GPHGLGKT) lines the ATP pocket. Catalysis depends on Glu36, which acts as the Proton acceptor. 2 residues coordinate substrate: Tyr54 and Gln78. Arg169 contacts ATP. Arg175 provides a ligand contact to substrate.

This sequence belongs to the herpesviridae thymidine kinase family. In terms of assembly, homodimer.

The enzyme catalyses thymidine + ATP = dTMP + ADP + H(+). Catalyzes the transfer of the gamma-phospho group of ATP to thymidine to generate dTMP in the salvage pathway of pyrimidine synthesis. The dTMP serves as a substrate for DNA polymerase during viral DNA replication. Allows the virus to be reactivated and to grow in non-proliferative cells lacking a high concentration of phosphorylated nucleic acid precursors. In Bos taurus (Bovine), this protein is Thymidine kinase.